We begin with the raw amino-acid sequence, 293 residues long: UDP-3-O-acyl-N-acetylglucosamine deacetylase (293 aa).

Positions 79, 236, and 240 each coordinate Zn(2+). The Proton donor role is filled by histidine 263.

The protein belongs to the LpxC family. The cofactor is Zn(2+).

It catalyses the reaction a UDP-3-O-[(3R)-3-hydroxyacyl]-N-acetyl-alpha-D-glucosamine + H2O = a UDP-3-O-[(3R)-3-hydroxyacyl]-alpha-D-glucosamine + acetate. It functions in the pathway glycolipid biosynthesis; lipid IV(A) biosynthesis; lipid IV(A) from (3R)-3-hydroxytetradecanoyl-[acyl-carrier-protein] and UDP-N-acetyl-alpha-D-glucosamine: step 2/6. Its function is as follows. Catalyzes the hydrolysis of UDP-3-O-myristoyl-N-acetylglucosamine to form UDP-3-O-myristoylglucosamine and acetate, the committed step in lipid A biosynthesis. The polypeptide is UDP-3-O-acyl-N-acetylglucosamine deacetylase (Phenylobacterium zucineum (strain HLK1)).